A 230-amino-acid polypeptide reads, in one-letter code: Flagellar L-ring protein (230 aa).

Residues 1 to 18 form the signal peptide; the sequence is MNRLNIAVSCLATALLFG. Cysteine 19 is lipidated: N-palmitoyl cysteine. Cysteine 19 carries S-diacylglycerol cysteine lipidation.

The protein belongs to the FlgH family. In terms of assembly, the basal body constitutes a major portion of the flagellar organelle and consists of four rings (L,P,S, and M) mounted on a central rod.

The protein localises to the cell outer membrane. The protein resides in the bacterial flagellum basal body. Its function is as follows. Assembles around the rod to form the L-ring and probably protects the motor/basal body from shearing forces during rotation. The sequence is that of Flagellar L-ring protein from Legionella pneumophila (strain Paris).